Reading from the N-terminus, the 158-residue chain is Endoribonuclease YbeY (158 aa).

Zn(2+) is bound by residues His119, His123, and Asp129.

It belongs to the endoribonuclease YbeY family. Zn(2+) serves as cofactor.

The protein resides in the cytoplasm. Functionally, single strand-specific metallo-endoribonuclease involved in late-stage 70S ribosome quality control and in maturation of the 3' terminus of the 16S rRNA. The polypeptide is Endoribonuclease YbeY (Chlamydia pneumoniae (Chlamydophila pneumoniae)).